We begin with the raw amino-acid sequence, 137 residues long: ATP synthase epsilon chain (137 aa).

It belongs to the ATPase epsilon chain family. As to quaternary structure, F-type ATPases have 2 components, CF(1) - the catalytic core - and CF(0) - the membrane proton channel. CF(1) has five subunits: alpha(3), beta(3), gamma(1), delta(1), epsilon(1). CF(0) has three main subunits: a, b and c.

It is found in the cell inner membrane. Its function is as follows. Produces ATP from ADP in the presence of a proton gradient across the membrane. This chain is ATP synthase epsilon chain, found in Magnetococcus marinus (strain ATCC BAA-1437 / JCM 17883 / MC-1).